Consider the following 556-residue polypeptide: Hydroxylamine reductase (556 aa).

The [4Fe-4S] cluster site is built by cysteine 4, cysteine 7, cysteine 19, and cysteine 26. The hybrid [4Fe-2O-2S] cluster site is built by histidine 252, glutamate 276, cysteine 320, cysteine 407, cysteine 435, cysteine 460, glutamate 494, and lysine 496. Residue cysteine 407 is modified to Cysteine persulfide.

Belongs to the HCP family. It depends on [4Fe-4S] cluster as a cofactor. The cofactor is hybrid [4Fe-2O-2S] cluster.

Its subcellular location is the cytoplasm. It carries out the reaction A + NH4(+) + H2O = hydroxylamine + AH2 + H(+). Its function is as follows. Catalyzes the reduction of hydroxylamine to form NH(3) and H(2)O. This chain is Hydroxylamine reductase, found in Acidithiobacillus ferridurans.